Consider the following 433-residue polypeptide: ATP-dependent protease ATPase subunit HslU (433 aa).

ATP-binding positions include Val18, 60-65, Asp246, Glu311, and Arg383; that span reads GVGKTE.

It belongs to the ClpX chaperone family. HslU subfamily. A double ring-shaped homohexamer of HslV is capped on each side by a ring-shaped HslU homohexamer. The assembly of the HslU/HslV complex is dependent on binding of ATP.

It localises to the cytoplasm. Its function is as follows. ATPase subunit of a proteasome-like degradation complex; this subunit has chaperone activity. The binding of ATP and its subsequent hydrolysis by HslU are essential for unfolding of protein substrates subsequently hydrolyzed by HslV. HslU recognizes the N-terminal part of its protein substrates and unfolds these before they are guided to HslV for hydrolysis. This is ATP-dependent protease ATPase subunit HslU from Rhodopseudomonas palustris (strain ATCC BAA-98 / CGA009).